The chain runs to 168 residues: Peptide methionine sulfoxide reductase MsrA 2 (168 aa).

Residue Cys-11 is part of the active site.

It belongs to the MsrA Met sulfoxide reductase family.

It carries out the reaction L-methionyl-[protein] + [thioredoxin]-disulfide + H2O = L-methionyl-(S)-S-oxide-[protein] + [thioredoxin]-dithiol. The catalysed reaction is [thioredoxin]-disulfide + L-methionine + H2O = L-methionine (S)-S-oxide + [thioredoxin]-dithiol. In terms of biological role, has an important function as a repair enzyme for proteins that have been inactivated by oxidation. Catalyzes the reversible oxidation-reduction of methionine sulfoxide in proteins to methionine. The protein is Peptide methionine sulfoxide reductase MsrA 2 of Rhodopirellula baltica (strain DSM 10527 / NCIMB 13988 / SH1).